The sequence spans 306 residues: Beta-lactamase 1 (306 aa).

Residues 1–43 (MKNKRMLKIGMCVGILGLSVTSLEAFTGGALQVEAKEKTGQVK) form the signal peptide. Residue Ser-89 is the Acyl-ester intermediate of the active site. Glu-185 serves as the catalytic Proton acceptor. 251 to 253 (KSG) contacts substrate.

Belongs to the class-A beta-lactamase family.

It carries out the reaction a beta-lactam + H2O = a substituted beta-amino acid. This protein is a beta-lactamase with a substrate specificity for penicillins. The chain is Beta-lactamase 1 (blaCI) from Bacillus mycoides.